Consider the following 1323-residue polypeptide: DNA-directed RNA polymerase subunit beta' (1323 aa).

Zn(2+) contacts are provided by C60, C62, C75, and C78. D535, D537, and D539 together coordinate Mg(2+). The Zn(2+) site is built by C894, C977, C984, and C987.

Belongs to the RNA polymerase beta' chain family. As to quaternary structure, the RNAP catalytic core consists of 2 alpha, 1 beta, 1 beta' and 1 omega subunit. When a sigma factor is associated with the core the holoenzyme is formed, which can initiate transcription. Mg(2+) is required as a cofactor. Zn(2+) serves as cofactor.

The enzyme catalyses RNA(n) + a ribonucleoside 5'-triphosphate = RNA(n+1) + diphosphate. Its function is as follows. DNA-dependent RNA polymerase catalyzes the transcription of DNA into RNA using the four ribonucleoside triphosphates as substrates. The polypeptide is DNA-directed RNA polymerase subunit beta' (Corynebacterium urealyticum (strain ATCC 43042 / DSM 7109)).